Here is a 219-residue protein sequence, read N- to C-terminus: KP6 killer toxin (219 aa).

Positions 1–19 (MLIFSVLMYLGLLLAGASA) are cleaved as a signal peptide. Positions 20–27 (LPNGLSPR) are excised as a propeptide. Cystine bridges form between cysteine 32–cysteine 39, cysteine 43–cysteine 101, cysteine 45–cysteine 92, and cysteine 62–cysteine 78. An N-linked (GlcNAc...) asparagine; by host glycan is attached at asparagine 98. The propeptide occupies 106-138 (KRTIQDSATDTVDLGAELHRDDPPPTASDIGKR). The segment at 120-142 (GAELHRDDPPPTASDIGKRGKRP) is disordered.

In terms of assembly, heterodimer of two small polypeptides that are not covalently linked.

It localises to the secreted. In terms of biological role, this protein is lethal to sensitive cells of the same or related species. The KP6 alpha subunit is known to recognize some cellular receptors before interaction of the complex with KP6 beta, precipitating cell death. In Ustilago maydis P6 virus (UmV6), this protein is KP6 killer toxin.